We begin with the raw amino-acid sequence, 413 residues long: Arginine biosynthesis bifunctional protein ArgJ (413 aa).

Substrate-binding residues include Thr163, Lys189, Thr200, Glu286, Asn408, and Thr413. Residue Thr200 is the Nucleophile of the active site.

Belongs to the ArgJ family. As to quaternary structure, heterotetramer of two alpha and two beta chains.

The protein resides in the cytoplasm. The catalysed reaction is N(2)-acetyl-L-ornithine + L-glutamate = N-acetyl-L-glutamate + L-ornithine. It carries out the reaction L-glutamate + acetyl-CoA = N-acetyl-L-glutamate + CoA + H(+). It functions in the pathway amino-acid biosynthesis; L-arginine biosynthesis; L-ornithine and N-acetyl-L-glutamate from L-glutamate and N(2)-acetyl-L-ornithine (cyclic): step 1/1. Its pathway is amino-acid biosynthesis; L-arginine biosynthesis; N(2)-acetyl-L-ornithine from L-glutamate: step 1/4. Functionally, catalyzes two activities which are involved in the cyclic version of arginine biosynthesis: the synthesis of N-acetylglutamate from glutamate and acetyl-CoA as the acetyl donor, and of ornithine by transacetylation between N(2)-acetylornithine and glutamate. The chain is Arginine biosynthesis bifunctional protein ArgJ from Staphylococcus aureus (strain COL).